The chain runs to 553 residues: Dihydroxy-acid dehydratase (553 aa).

Mg(2+) is bound at residue aspartate 78. Cysteine 119 contacts [2Fe-2S] cluster. Residues aspartate 120 and lysine 121 each contribute to the Mg(2+) site. An N6-carboxylysine modification is found at lysine 121. Residue cysteine 193 coordinates [2Fe-2S] cluster. Glutamate 441 lines the Mg(2+) pocket. The active-site Proton acceptor is the serine 467.

It belongs to the IlvD/Edd family. In terms of assembly, homodimer. The cofactor is [2Fe-2S] cluster. It depends on Mg(2+) as a cofactor.

It catalyses the reaction (2R)-2,3-dihydroxy-3-methylbutanoate = 3-methyl-2-oxobutanoate + H2O. It carries out the reaction (2R,3R)-2,3-dihydroxy-3-methylpentanoate = (S)-3-methyl-2-oxopentanoate + H2O. It functions in the pathway amino-acid biosynthesis; L-isoleucine biosynthesis; L-isoleucine from 2-oxobutanoate: step 3/4. It participates in amino-acid biosynthesis; L-valine biosynthesis; L-valine from pyruvate: step 3/4. In terms of biological role, functions in the biosynthesis of branched-chain amino acids. Catalyzes the dehydration of (2R,3R)-2,3-dihydroxy-3-methylpentanoate (2,3-dihydroxy-3-methylvalerate) into 2-oxo-3-methylpentanoate (2-oxo-3-methylvalerate) and of (2R)-2,3-dihydroxy-3-methylbutanoate (2,3-dihydroxyisovalerate) into 2-oxo-3-methylbutanoate (2-oxoisovalerate), the penultimate precursor to L-isoleucine and L-valine, respectively. The polypeptide is Dihydroxy-acid dehydratase (Geobacter sulfurreducens (strain ATCC 51573 / DSM 12127 / PCA)).